The following is a 346-amino-acid chain: S-adenosylmethionine:tRNA ribosyltransferase-isomerase (346 aa).

The protein belongs to the QueA family. As to quaternary structure, monomer.

Its subcellular location is the cytoplasm. It carries out the reaction 7-aminomethyl-7-carbaguanosine(34) in tRNA + S-adenosyl-L-methionine = epoxyqueuosine(34) in tRNA + adenine + L-methionine + 2 H(+). The protein operates within tRNA modification; tRNA-queuosine biosynthesis. Functionally, transfers and isomerizes the ribose moiety from AdoMet to the 7-aminomethyl group of 7-deazaguanine (preQ1-tRNA) to give epoxyqueuosine (oQ-tRNA). This chain is S-adenosylmethionine:tRNA ribosyltransferase-isomerase, found in Cereibacter sphaeroides (strain KD131 / KCTC 12085) (Rhodobacter sphaeroides).